Reading from the N-terminus, the 139-residue chain is CLAVATA3/ESR (CLE)-related protein 1 (139 aa).

The first 22 residues, 1-22 (MPNIFKILLIVLLAVVSFRLSA), serve as a signal peptide directing secretion. The required for secretion from the host cytoplasm to the host apoplasm stretch occupies residues 23–90 (STGDKKTAND…VPSHLTNRSM (68 aa)). Residues asparagine 37 and asparagine 87 are each glycosylated (N-linked (GlcNAc...) asparagine). A disordered region spans residues 66–139 (AIGRSNAQGG…SPSGPDPHHH (74 aa)). Positions 100–125 (EKGAATRVEKMRAQLRELAEKMTDKD) form a coiled coil. Over residues 106–128 (RVEKMRAQLRELAEKMTDKDPKR) the composition is skewed to basic and acidic residues. Positions 128 to 139 (RLSPSGPDPHHH) match the CLE motif.

It belongs to the CLV3/ESR signal peptide family. As to expression, highly expressed exclusively within the dorsal esophageal gland cell during syncytium formation in host plants (at protein level).

The protein resides in the secreted. Its subcellular location is the host cytoplasm. It localises to the host extracellular space. It is found in the extracellular space. The protein localises to the apoplast. Mimics host plant CLE extracellular signal peptides that regulate cell fate. May play a role in the differentiation or division of feeding cells (syncytia) induced in plant roots during infection. In Heterodera glycines (Soybean cyst nematode worm), this protein is CLAVATA3/ESR (CLE)-related protein 1 (CLE1).